We begin with the raw amino-acid sequence, 349 residues long: Secondary metabolism regulator LAE1 (349 aa).

Positions M1–E46 are disordered. Over residues N25–A38 the composition is skewed to polar residues.

Belongs to the methyltransferase superfamily. LaeA methyltransferase family. As to quaternary structure, component of the heterotrimeric velvet complex composed of LAE1, VEL1 and VEL2; VEL1 acting as a bridging protein between LAE1 and VEL2.

Its subcellular location is the nucleus. The enzyme catalyses L-methionyl-[protein] + S-adenosyl-L-methionine = S-methyl-L-methionyl-[protein] + S-adenosyl-L-homocysteine. Methyltransferase that performs automethylation. No other methyl-accepting substrate has been identified yet. Component of the velvet transcription factor complex that acts as a global regulator for secondary metabolite gene expression. Controls the expression of the gamma-pentyl-pyrone gene clusters. Required for the expression of cellulase. Regulates asexual sporulation (conidiation) by environmental stimuli such as light and/or mechanical injury. Required for oxidative stress tolerance. Also plays a role in defense and parasitism on other fungi. The polypeptide is Secondary metabolism regulator LAE1 (Hypocrea atroviridis (strain ATCC 20476 / IMI 206040) (Trichoderma atroviride)).